Reading from the N-terminus, the 467-residue chain is Light-independent protochlorophyllide reductase subunit N (467 aa).

The [4Fe-4S] cluster site is built by Cys-24, Cys-49, and Cys-109.

The protein belongs to the BchN/ChlN family. In terms of assembly, protochlorophyllide reductase is composed of three subunits; ChlL, ChlN and ChlB. Forms a heterotetramer of two ChlB and two ChlN subunits. The cofactor is [4Fe-4S] cluster.

It carries out the reaction chlorophyllide a + oxidized 2[4Fe-4S]-[ferredoxin] + 2 ADP + 2 phosphate = protochlorophyllide a + reduced 2[4Fe-4S]-[ferredoxin] + 2 ATP + 2 H2O. It participates in porphyrin-containing compound metabolism; chlorophyll biosynthesis (light-independent). Component of the dark-operative protochlorophyllide reductase (DPOR) that uses Mg-ATP and reduced ferredoxin to reduce ring D of protochlorophyllide (Pchlide) to form chlorophyllide a (Chlide). This reaction is light-independent. The NB-protein (ChlN-ChlB) is the catalytic component of the complex. The chain is Light-independent protochlorophyllide reductase subunit N from Leptolyngbya boryana (Plectonema boryanum).